The sequence spans 197 residues: Nucleoid occlusion factor SlmA (197 aa).

Positions 7–67 constitute an HTH tetR-type domain; that stretch reads INRREHILQC…GLIDFIEESL (61 aa). Positions 30-49 form a DNA-binding region, H-T-H motif; sequence TTAKLAAEVGVSEAALYRHF.

This sequence belongs to the nucleoid occlusion factor SlmA family. In terms of assembly, homodimer. Interacts with FtsZ.

The protein resides in the cytoplasm. Its subcellular location is the nucleoid. Its function is as follows. Required for nucleoid occlusion (NO) phenomenon, which prevents Z-ring formation and cell division over the nucleoid. Acts as a DNA-associated cell division inhibitor that binds simultaneously chromosomal DNA and FtsZ, and disrupts the assembly of FtsZ polymers. SlmA-DNA-binding sequences (SBS) are dispersed on non-Ter regions of the chromosome, preventing FtsZ polymerization at these regions. The sequence is that of Nucleoid occlusion factor SlmA from Shewanella woodyi (strain ATCC 51908 / MS32).